Here is a 327-residue protein sequence, read N- to C-terminus: COP9 signalosome complex subunit 7 (327 aa).

Residues 4–165 (VHHRALDALQ…NPPTVNVTSV (162 aa)) enclose the PCI domain. 2 disordered regions span residues 233 to 260 (GGEQ…AGWK) and 276 to 327 (GGSN…GKKS). Residues 236–255 (QLQGGNPGQGQGQGQGGLGK) show a composition bias toward gly residues. Residues 315-327 (GARHSKRFLGKKS) are compositionally biased toward basic residues.

This sequence belongs to the CSN7/EIF3M family. CSN7 subfamily. As to quaternary structure, component of the COP9 signalosome (CSN) complex. Present in uninduced vegetative hyphae, induced conidiating cultures and in both conidiospores and ascospores.

It is found in the cytoplasm. It localises to the nucleus. In terms of biological role, component of the COP9 signalosome (CSN) complex that acts as an regulator of the ubiquitin (Ubl) conjugation pathway by mediating the deneddylation of the cullin subunit of SCF-type E3 ubiquitin-protein ligase complexes. The CSN complex seems to link protein degradation to sexual development. May be required for sporulation only at elevated temperatures. This is COP9 signalosome complex subunit 7 (csnG) from Emericella nidulans (strain FGSC A4 / ATCC 38163 / CBS 112.46 / NRRL 194 / M139) (Aspergillus nidulans).